A 547-amino-acid polypeptide reads, in one-letter code: CTP synthase (547 aa).

Positions 1 to 273 (MNNKKLKSKF…DHFILNHFQL (273 aa)) are amidoligase domain. Ser19 serves as a coordination point for CTP. Ser19 is a binding site for UTP. ATP is bound at residue 20–25 (SLGKGI). Residue Tyr60 coordinates L-glutamine. Asp77 is an ATP binding site. Residues Asp77 and Glu147 each contribute to the Mg(2+) site. CTP is bound by residues 154 to 156 (DIE), 194 to 199 (KTKPTQ), and Lys230. Residues 194-199 (KTKPTQ) and Lys230 contribute to the UTP site. The 234-residue stretch at 306–539 (YVILHDAYLS…VEAALLKNGK (234 aa)) folds into the Glutamine amidotransferase type-1 domain. L-glutamine is bound at residue Gly361. Cys388 serves as the catalytic Nucleophile; for glutamine hydrolysis. L-glutamine is bound by residues 389–392 (FGMQ), Glu412, and Arg466. Catalysis depends on residues His512 and Glu514.

This sequence belongs to the CTP synthase family. As to quaternary structure, homotetramer.

It carries out the reaction UTP + L-glutamine + ATP + H2O = CTP + L-glutamate + ADP + phosphate + 2 H(+). The catalysed reaction is L-glutamine + H2O = L-glutamate + NH4(+). The enzyme catalyses UTP + NH4(+) + ATP = CTP + ADP + phosphate + 2 H(+). It functions in the pathway pyrimidine metabolism; CTP biosynthesis via de novo pathway; CTP from UDP: step 2/2. Its activity is regulated as follows. Allosterically activated by GTP, when glutamine is the substrate; GTP has no effect on the reaction when ammonia is the substrate. The allosteric effector GTP functions by stabilizing the protein conformation that binds the tetrahedral intermediate(s) formed during glutamine hydrolysis. Inhibited by the product CTP, via allosteric rather than competitive inhibition. In terms of biological role, catalyzes the ATP-dependent amination of UTP to CTP with either L-glutamine or ammonia as the source of nitrogen. Regulates intracellular CTP levels through interactions with the four ribonucleotide triphosphates. In Phytoplasma australiense, this protein is CTP synthase.